A 97-amino-acid polypeptide reads, in one-letter code: Co-chaperonin GroES (97 aa).

The protein belongs to the GroES chaperonin family. Heptamer of 7 subunits arranged in a ring. Interacts with the chaperonin GroEL.

Its subcellular location is the cytoplasm. Together with the chaperonin GroEL, plays an essential role in assisting protein folding. The GroEL-GroES system forms a nano-cage that allows encapsulation of the non-native substrate proteins and provides a physical environment optimized to promote and accelerate protein folding. GroES binds to the apical surface of the GroEL ring, thereby capping the opening of the GroEL channel. This is Co-chaperonin GroES from Salmonella agona (strain SL483).